The chain runs to 267 residues: CD82 antigen (267 aa).

The Cytoplasmic portion of the chain corresponds to Met1–Tyr11. The S-palmitoyl cysteine moiety is linked to residue Cys5. The chain crosses the membrane as a helical span at residues Phe12–Val32. At Trp33–Arg53 the chain is on the extracellular side. Residues Met54–Leu72 traverse the membrane as a helical segment. Residues Gly73–Cys83 are Cytoplasmic-facing. Cys74 carries the S-palmitoyl cysteine lipid modification. Residues Leu84 to Met110 traverse the membrane as a helical segment. At Gly111–Leu228 the chain is on the extracellular side. N-linked (GlcNAc...) asparagine glycosylation is found at Asn129, Asn157, and Asn198. A helical membrane pass occupies residues Gly229–Ile250. At Cys251–Tyr267 the chain is on the cytoplasmic side.

It belongs to the tetraspanin (TM4SF) family. In terms of assembly, forms homooligomers. Interacts directly with IGSF8. Interacts with EGFR. Interacts with VEGFA and PDGFB. Interacts with ITGA4. Interacts with ITGA6; this interaction reduces ITGA6 cell surface expression. Interacts with ITGB1. Interacts with TLR4; this interaction inhibits TLR4-mediated signaling pathway. Interacts with TLR9. Interacts with PLAUR. In terms of processing, palmitoylated. Palmitoylation contributes to oligomerization and surface expression. In terms of tissue distribution, lymphoid specific.

The protein localises to the cell membrane. It localises to the cytoplasmic vesicle. It is found in the phagosome. In terms of biological role, structural component of specialized membrane microdomains known as tetraspanin-enriched microdomains (TERMs), which act as platforms for receptor clustering and signaling. Participates thereby in diverse biological functions such as cell signal transduction, adhesion, migration and protein trafficking. Acts as a attenuator of EGF signaling, facilitating ligand-induced endocytosis of the receptor and its subsequent desensitization. Mechanistically, modulates ligand-induced ubiquitination and trafficking of EGFR via E3 ligase CBL phosphorylation by PKC. Increases cell-matrix adhesion by regulating the membrane organization of integrin alpha4/ITA4. Modulates adhesion and suppresses cell migration through other integrins such as the alpha6/ITGA6 and beta1/ITGB1. Decreases cell-associated plasminogen activation by interfering with the interaction between urokinase-type plasminogen activator/PLAU and its receptor PLAUR. Associates with CD4 or CD8 and delivers costimulatory signals for the TCR/CD3 pathway. Plays a role in TLR9 trafficking to acidified CpG-containing compartments by controlling interaction between TLR9 and VAMP3 and subsequent myddosome assembly. Inhibits LPS-induced inflammatory response by preventing binding of LPS to TLR4 on the cell surface. Plays a role in the activation of macrophages into anti-inflammatory phenotypes. Independently of Toll-like receptor (TLR) signaling, is recruited to pathogen-containing phagosomes prior to fusion with lysosomes and thereby participates in antigen presentation. Also acts to control angiogenesis and switch angiogenic milieu to quiescent state by binding and sequestering VEGFA and PDGFB to inhibit the signaling they trigger via their respective cell surface receptor. The chain is CD82 antigen (CD82) from Homo sapiens (Human).